The following is a 490-amino-acid chain: Hydroxysteroid dehydrogenase-like protein 2 (490 aa).

Residues 17–23 (GASRGIG), lysine 42, and aspartate 74 each bind NADP(+). Lysine 42 carries the post-translational modification N6-(2-hydroxyisobutyryl)lysine. An N6-acetyllysine modification is found at lysine 116. Catalysis depends on tyrosine 168, which acts as the Proton acceptor. Lysine 172 is a binding site for NADP(+). Positions 282-301 (MEEKESNDSVPEVKEEKLQL) are enriched in basic and acidic residues. The tract at residues 282 to 370 (MEEKESNDSV…PRQQPQPFVQ (89 aa)) is disordered. The span at 302-367 (QEESQLQKQP…QPRPRQQPQP (66 aa)) shows a compositional bias: low complexity. An SCP2 domain is found at 380–487 (GAVEETFRIV…KLEKLMTQMN (108 aa)). Lysine 390 is subject to N6-succinyllysine.

The protein belongs to the short-chain dehydrogenases/reductases (SDR) family. As to expression, widely expressed.

Its subcellular location is the peroxisome. The protein resides in the mitochondrion. In terms of biological role, has apparently no steroid dehydrogenase activity. Controls bile acid (BA) and lipid metabolism in response to nutritional cues. In Mus musculus (Mouse), this protein is Hydroxysteroid dehydrogenase-like protein 2 (Hsdl2).